Reading from the N-terminus, the 216-residue chain is Large ribosomal subunit protein uL1 (216 aa).

It belongs to the universal ribosomal protein uL1 family. As to quaternary structure, component of the large ribosomal subunit.

It localises to the cytoplasm. Component of the large ribosomal subunit. The ribosome is a large ribonucleoprotein complex responsible for the synthesis of proteins in the cell. In Ictalurus punctatus (Channel catfish), this protein is Large ribosomal subunit protein uL1 (rpl10a).